The primary structure comprises 206 residues: Histidine biosynthesis bifunctional protein HisIE (206 aa).

Positions 1–117 (MGSETTAAGD…SCFPTAPSQF (117 aa)) are phosphoribosyl-AMP cyclohydrolase. A phosphoribosyl-ATP pyrophosphohydrolase region spans residues 118–206 (LGSLDALIAE…AVALLESRHK (89 aa)).

This sequence in the N-terminal section; belongs to the PRA-CH family. In the C-terminal section; belongs to the PRA-PH family.

The protein localises to the cytoplasm. The catalysed reaction is 1-(5-phospho-beta-D-ribosyl)-ATP + H2O = 1-(5-phospho-beta-D-ribosyl)-5'-AMP + diphosphate + H(+). The enzyme catalyses 1-(5-phospho-beta-D-ribosyl)-5'-AMP + H2O = 1-(5-phospho-beta-D-ribosyl)-5-[(5-phospho-beta-D-ribosylamino)methylideneamino]imidazole-4-carboxamide. Its pathway is amino-acid biosynthesis; L-histidine biosynthesis; L-histidine from 5-phospho-alpha-D-ribose 1-diphosphate: step 2/9. The protein operates within amino-acid biosynthesis; L-histidine biosynthesis; L-histidine from 5-phospho-alpha-D-ribose 1-diphosphate: step 3/9. The chain is Histidine biosynthesis bifunctional protein HisIE from Xanthomonas campestris pv. campestris (strain ATCC 33913 / DSM 3586 / NCPPB 528 / LMG 568 / P 25).